The following is a 353-amino-acid chain: Anthranilate phosphoribosyltransferase (353 aa).

5-phospho-alpha-D-ribose 1-diphosphate is bound by residues G87, 90 to 91 (GD), T95, 97 to 100 (NIST), 115 to 123 (KHGNRAASS), and T127. G87 is an anthranilate binding site. Mg(2+) is bound at residue S99. N118 is an anthranilate binding site. R173 is a binding site for anthranilate. The Mg(2+) site is built by D231 and E232.

The protein belongs to the anthranilate phosphoribosyltransferase family. As to quaternary structure, homodimer. Mg(2+) is required as a cofactor.

The catalysed reaction is N-(5-phospho-beta-D-ribosyl)anthranilate + diphosphate = 5-phospho-alpha-D-ribose 1-diphosphate + anthranilate. Its pathway is amino-acid biosynthesis; L-tryptophan biosynthesis; L-tryptophan from chorismate: step 2/5. Its function is as follows. Catalyzes the transfer of the phosphoribosyl group of 5-phosphorylribose-1-pyrophosphate (PRPP) to anthranilate to yield N-(5'-phosphoribosyl)-anthranilate (PRA). This is Anthranilate phosphoribosyltransferase from Salinispora arenicola (strain CNS-205).